The following is an 823-amino-acid chain: Probable inorganic carbon transporter subunit DabA (823 aa).

C361, D363, H527, and C542 together coordinate Zn(2+).

The protein belongs to the inorganic carbon transporter (TC 9.A.2) DabA family. In terms of assembly, forms a complex with DabB. Requires Zn(2+) as cofactor.

Its subcellular location is the cell inner membrane. Its activity is regulated as follows. Intracellular DIC accumulation is sensitive to CCCP (carbonyl cyanide-m-chlorophenylhydrazone) and DCCD (N,N-dicyclohexylcarbodiimide) and therefore likely driven by either proton potential, ATP, or both. Its function is as follows. Part of an energy-coupled inorganic carbon pump. In terms of biological role, probably involved in transport of dissolved inorganic carbon (DIC) with upstream gene dabB (Tcr_0853); has been suggested to be a proton-DIC symporter. This Hydrogenovibrio crunogenus (strain DSM 25203 / XCL-2) (Thiomicrospira crunogena) protein is Probable inorganic carbon transporter subunit DabA.